A 908-amino-acid polypeptide reads, in one-letter code: Low affinity vacuolar monovalent cation/H(+) antiporter (908 aa).

Positions 1–15 (MAKNNHISASGNSTS) are enriched in polar residues. The interval 1 to 20 (MAKNNHISASGNSTSGDHRL) is disordered. At 1 to 244 (MAKNNHISAS…WEVTCSNVLW (244 aa)) the chain is on the cytoplasmic side. Threonine 26 carries the post-translational modification Phosphothreonine. Serine 32 carries the post-translational modification Phosphoserine. Threonine 33 bears the Phosphothreonine mark. Residues 68–147 (NKSKRSVSSQ…DDEDANDDSR (80 aa)) are disordered. The span at 73-87 (SVSSQSPIVHSSNNT) shows a compositional bias: low complexity. A compositionally biased stretch (polar residues) spans 102–121 (ESLSSKSHSVPDLNTATPSS). At serine 110 the chain carries Phosphoserine. Phosphothreonine is present on threonine 118. Serine 121 bears the Phosphoserine mark. Residues 245 to 265 (FILFGFPIAILFYSAAIVVFL) traverse the membrane as a helical segment. Residues 266–408 (LGGGGLVTNS…GRVLFYTIFH (143 aa)) are Vacuolar-facing. N-linked (GlcNAc...) asparagine glycosylation occurs at asparagine 361. Residues 409 to 429 (LVLQPILAVLSLCLWLLVFTI) traverse the membrane as a helical segment. The Cytoplasmic portion of the chain corresponds to 430–494 (PMSNVLWQIM…HYYKYTVDGT (65 aa)). The helical transmembrane segment at 495-515 (NVIVVNLISIVFFTIFDFYVL) threads the bilayer. Residues 516-530 (KNFLHWKTWFTYESS) are Vacuolar-facing. The chain crosses the membrane as a helical span at residues 531-551 (IFILCLTSTIPLAFYIGQAVA). The Cytoplasmic portion of the chain corresponds to 552 to 560 (SISAQTSMG). A helical transmembrane segment spans residues 561-581 (VGAVINAFFSTIVEIFLYCVA). Over 582 to 587 (LQQKKG) the chain is Vacuolar. A helical transmembrane segment spans residues 588 to 608 (LLVEGSMIGSILGAVLLLPGL). Residues 609–626 (SMCGGALNRKTQRYNPAS) are Cytoplasmic-facing. The helical transmembrane segment at 627-647 (AGVSSALLIFSMIVMFVPTVL) threads the bilayer. The Vacuolar segment spans residues 648 to 686 (YEIYGGYSVNCADGANDRDCTFSHPPLKFNRLFTHVIQP). Residues 687-707 (MSISCAIVLFCAYIIGLWFTL) traverse the membrane as a helical segment. Residues 708–746 (RTHAKMIWQLPIADPTSTAPEQQEQNSHDAPNWSRSKST) lie on the Cytoplasmic side of the membrane. Residues 747-767 (CILLMSTLLYAIIAEILVSCV) form a helical membrane-spanning segment. At 768–783 (DAVLEDIPSLNPKFLG) the chain is on the vacuolar side. Residues 784–804 (LTIFALIPNTTEFLNAISFAI) form a helical membrane-spanning segment. Residues 805-816 (HGNVALSMEIGS) lie on the Cytoplasmic side of the membrane. A helical transmembrane segment spans residues 817 to 837 (AYALQVCLLQIPSLVIYSIFY). The Vacuolar segment spans residues 838–851 (TWNVKKSMINIRTQ). Residues 852–872 (MFPLVFPRWDIFGAMTSVFMF) form a helical membrane-spanning segment. Residues 873-885 (TYLYAEGKSNYFK) are Cytoplasmic-facing. A helical transmembrane segment spans residues 886–906 (GSMLILLYIIIVVGFYFQGAL). Residues 907-908 (SE) are Vacuolar-facing.

Belongs to the Ca(2+):cation antiporter (CaCA) (TC 2.A.19) family.

It is found in the vacuole membrane. In terms of biological role, has a role in promoting intracellular monovalent cation sequestration via the exchange of monovalent cations and especially Na(+) for hydrogen ions across the vacuolar membrane. In Saccharomyces cerevisiae (strain ATCC 204508 / S288c) (Baker's yeast), this protein is Low affinity vacuolar monovalent cation/H(+) antiporter (VNX1).